The chain runs to 148 residues: MTERTLVLLKPDAVKRRLIGRIISRLEDKGLKVVALKFMQMTKDQAENHYSVHRSKPFFKDLVTYITSGPIVAMVLEGPKAIEVVRILAGSTDGSKAQPGTIRGDFSMGIEKNIIHASDSPEAYSHEMPIFFNESEIVEWSYGDEIIY.

Residues K10, F58, R86, T92, R103, and N113 each coordinate ATP. H116 functions as the Pros-phosphohistidine intermediate in the catalytic mechanism.

This sequence belongs to the NDK family. The cofactor is Mg(2+).

The protein resides in the cytoplasm. The catalysed reaction is a 2'-deoxyribonucleoside 5'-diphosphate + ATP = a 2'-deoxyribonucleoside 5'-triphosphate + ADP. It catalyses the reaction a ribonucleoside 5'-diphosphate + ATP = a ribonucleoside 5'-triphosphate + ADP. Functionally, major role in the synthesis of nucleoside triphosphates other than ATP. The ATP gamma phosphate is transferred to the NDP beta phosphate via a ping-pong mechanism, using a phosphorylated active-site intermediate. The sequence is that of Nucleoside diphosphate kinase from Thermoplasma acidophilum (strain ATCC 25905 / DSM 1728 / JCM 9062 / NBRC 15155 / AMRC-C165).